The chain runs to 206 residues: Ras-related protein RABG3c (206 aa).

15–22 (GDSGVGKT) serves as a coordination point for GTP. An Effector region motif is present at residues 37–45 (YKATIGADF). Residues 63 to 67 (DTAGQ), 125 to 128 (NKTD), and 158 to 159 (SA) each bind GTP. 2 S-geranylgeranyl cysteine lipidation sites follow: Cys-204 and Cys-206. Cys-206 is subject to Cysteine methyl ester.

This sequence belongs to the small GTPase superfamily. Rab family.

Its subcellular location is the cell membrane. Intracellular vesicle trafficking and protein transport. The protein is Ras-related protein RABG3c (RABG3C) of Arabidopsis thaliana (Mouse-ear cress).